A 1013-amino-acid chain; its full sequence is RNA-binding protein 44 (1013 aa).

Disordered regions lie at residues 1 to 25 (MQATAALETDSDKNYPKNGGHFQND) and 56 to 94 (LATEERASDKENSIVDQRDLSELSFSENQDSNRGNIFSQ). The segment covering 56–76 (LATEERASDKENSIVDQRDLS) has biased composition (basic and acidic residues). Positions 78–94 (LSFSENQDSNRGNIFSQ) are enriched in polar residues. Phosphoserine occurs at positions 365, 368, 510, 681, and 688. The RRM domain occupies 792 to 865 (FLIHVGGLCP…KSVTVRLVKI (74 aa)). Positions 905–925 (RAKSRQLESEQDSEFPPLDQG) are disordered.

In terms of assembly, homodimer. Interacts with TEX14. In terms of tissue distribution, highly expressed in testis. Also expressed in other tissues at lower level.

The protein resides in the cytoplasm. In terms of biological role, component of intercellular bridges during meiosis. Intercellular bridges are evolutionarily conserved structures that connect differentiating germ cells. Not required for fertility. The sequence is that of RNA-binding protein 44 (Rbm44) from Mus musculus (Mouse).